A 1434-amino-acid polypeptide reads, in one-letter code: DNA-directed RNA polymerase subunit beta' (1434 aa).

Residues Cys-70, Cys-72, Cys-85, and Cys-88 each contribute to the Zn(2+) site. Residues Asp-460, Asp-462, and Asp-464 each coordinate Mg(2+). The Zn(2+) site is built by Cys-840, Cys-915, Cys-922, and Cys-925.

The protein belongs to the RNA polymerase beta' chain family. As to quaternary structure, the RNAP catalytic core consists of 2 alpha, 1 beta, 1 beta' and 1 omega subunit. When a sigma factor is associated with the core the holoenzyme is formed, which can initiate transcription. Mg(2+) serves as cofactor. Requires Zn(2+) as cofactor.

It carries out the reaction RNA(n) + a ribonucleoside 5'-triphosphate = RNA(n+1) + diphosphate. DNA-dependent RNA polymerase catalyzes the transcription of DNA into RNA using the four ribonucleoside triphosphates as substrates. This is DNA-directed RNA polymerase subunit beta' from Aeromonas hydrophila subsp. hydrophila (strain ATCC 7966 / DSM 30187 / BCRC 13018 / CCUG 14551 / JCM 1027 / KCTC 2358 / NCIMB 9240 / NCTC 8049).